The sequence spans 1369 residues: ATP-dependent RNA helicase DHX29 (1369 aa).

Disordered regions lie at residues 27–75 (SAEA…TNDS) and 176–226 (SQEF…KNME). Ser71, Ser192, and Ser200 each carry phosphoserine. A compositionally biased stretch (polar residues) spans 189 to 201 (KFQSPQIQATISP). Residues 208 to 226 (KTYEEDPKSKPKKEEKNME) are compositionally biased toward basic and acidic residues. Coiled coils occupy residues 222–256 (EKNMEVNMKEWILRYAEQQNEEEKNENSKSLEEEE), 283–310 (LEKNKQGQKEAQEKIRKFQREMETLEDH), and 492–519 (IAKLLNKLKQQQQQQQQHSENKRENSED). The segment at 502-526 (QQQQQQQHSENKRENSEDPEESWEN) is disordered. One can recognise a Helicase ATP-binding domain in the interval 582 to 755 (VETLKRHRVV…FTHCPILRIS (174 aa)). Residue 595–602 (GETGSGKS) participates in ATP binding. The DEAH box signature appears at 702 to 705 (DEVH). In terms of domain architecture, Helicase C-terminal spans 849–1026 (LILELLAYLD…ELCLHIMKCN (178 aa)).

Belongs to the DEAD box helicase family. DEAH subfamily. Part of the 43S pre-initiation complex (PIC) that contains at least Met-tRNA, EIF1, EIF1A (EIF1AX or EIF1AY), EIF2S1, EIF2S2, EIF2S3, EIF3A, EIF3B, EIF3C, EIF3D, EIF3E, EIF3F, EIF3G, EIF3H, EIF3I, EIF3J, EIF3K, EIF3L, EIF3M, DHX29 and the 40S ribosomal subunit.

The protein resides in the cytoplasm. It carries out the reaction ATP + H2O = ADP + phosphate + H(+). Its function is as follows. ATP-binding RNA helicase involved in translation initiation. Part of the 43S pre-initiation complex that is required for efficient initiation on mRNAs of higher eukaryotes with structured 5'-UTRs by promoting efficient NTPase-dependent 48S complex formation. Specifically binds to the 40S ribosome near the mRNA entrance. Does not possess a processive helicase activity. This Homo sapiens (Human) protein is ATP-dependent RNA helicase DHX29.